The sequence spans 248 residues: 3-deoxy-manno-octulosonate cytidylyltransferase (248 aa).

The protein belongs to the KdsB family.

It localises to the cytoplasm. It catalyses the reaction 3-deoxy-alpha-D-manno-oct-2-ulosonate + CTP = CMP-3-deoxy-beta-D-manno-octulosonate + diphosphate. The protein operates within nucleotide-sugar biosynthesis; CMP-3-deoxy-D-manno-octulosonate biosynthesis; CMP-3-deoxy-D-manno-octulosonate from 3-deoxy-D-manno-octulosonate and CTP: step 1/1. Its pathway is bacterial outer membrane biogenesis; lipopolysaccharide biosynthesis. In terms of biological role, activates KDO (a required 8-carbon sugar) for incorporation into bacterial lipopolysaccharide in Gram-negative bacteria. In Alteromonas mediterranea (strain DSM 17117 / CIP 110805 / LMG 28347 / Deep ecotype), this protein is 3-deoxy-manno-octulosonate cytidylyltransferase.